Here is a 4306-residue protein sequence, read N- to C-terminus: MAGSLGDVRKLFLFTTTQNYFGLRPELWDQPPLSNCPEVNNFLDDGNQMLLRVQRSEAGLAFSNTIDFDDAKDKVLVFFKLRPEVITDGNLHNNILVSSMLESPINSLYQAVRQVFAPMLLKDQEWSRNFDPKLQNLLSELEAGLGIVLRKSDTNLPKLKLKEDDTRGILTPSDEFQFWIEQAHRGSKQISKERASYFKELFETISREFYNLDSLSLLEVVDLVETTRDVVDDVWRQTEHDHYPESRMLHLLDVIGGSFGRFVQKKLGSLKLWEDPYYLVKENLKAGISICEQWVIVCSHLTGQVWQRYVPHPWKSGKYFPETLDKLGKRLEEVLAIRTIHEKLLYFLPASEERIVCLSRVFEPFTGVNPVQYNPYTEPLWKAAVSQYEKIIAPAEQKIAGKLKNYISEIQDSPQQLLQAFLKYKELVKRPTISKELMLERETLLARLGDSAKDFRLDFENRCRGIPGDPSGPLSGKNLSEVVNNIVWVRQLELKVDDTIKIAEALLSDLSGFRSFHRSAEDLLDQFKLYEQEQFDDWSREVQSGLSDSRSGLCIEANSRIMELDPNDGALKVHYSDRLVILLREVRQLSALGFVIPAKIQQVANVAQKFCKQAIILKQVAHFYNSIDQQMIQSQRPMMLQSALAFEQIIKNSKAGSGGKSQITWDNPKELEGYIQKLQNAAERLATENRRLRKWHTTFCEKVVILMNIDLLRQQQRWKDGLQELRTGLATVAAQGFQASDMRAWRQHWNHQLYKALEHQYQVGLEALNENLPEINVDLTYKQGRLQFRPPFEEIRAKYYREMKRFIGIPNQFKGVGEAGDESIFSVMIDRNASGFLTIYSKAEDLFRRLSAVLHQHKEWVVIGQVDMEALVEKNLSTVHDWEKNFKALKIKGKEVERLPSAVKVDCLNINCSPVKTVIDDLIQKLFDLLVLSLKKSIQTHIHEIDTFVTEAMKVLTVIPQSVEEIGDTNVQYSNLQDRRPEILPLFQEAEDKNRLLRTVAGGGVETVSNLRAKWDKFELMMESHQLMIKDQIEVMKGNVKSRLQIYYQELDKFKARWDQLKPGDDIIETGQQNTMDQSAKSIKEKKIEFDDLEVIRKKLVDDCHHFGLEEPNFSLAYSISKDIESCAQIWALYEEFQQGLQDMAKEDWITYRAKIYLFEEFLINWHERLRKIEEHSVMTVKLQSEVDRYKMIIPILKYVRGEHLSPDHWLDLFRLLGLPRGTSLEKLLFGDLLRVADTIVEKASELKDLNSRAQGEVTIREALRELDLWGVGAVFSLIDYEDSQNHTIKLIKDWKDIVNQVGDNRCLLQSLKDSPYYKGFEDKVSIWERKLAQLDEYLQNLNHIQRKWVYLEPIFGRGALPKEQTRFNKVDEDFRSIMMDIRKDSRVTTLTTHAGIRNTLLTILDQLQRCQKSLNEFLEEKRSAFPRFYFIGDDDLLEILGQSTNPSVIQSHLKKLFAGINSVCFDEESKHITAMKSLEGEVVPFKSKVLLSNNVEAWLNDLALEMKQTLKQLLKECVTAGRSSQGAIDPSLFPSQILCLAEQIKFTEDVENAIKDHSLHQIEAQLVAKLERYTSVDTSSEDPGNSESGILELKLKALILDIIHNIDIVKQLNQVQVHTTDDWAWKKQVRFYMKSDHTCYVQMVDSELQYTYEYQGNAPKLVYTPLTDKCYLTLTQAMKMGLGGNPYGPAGTGKTESVKALGGLLGRQVLVFNCDEGIDVKSMGRIFVGLVKCGAWGCFDEFNRLEEAVLSAVSMQIQTIQDALKNHRTVCELLGKEVEINANSGIFITMNPAGKGYGGRQKLPDNLKQLFRPVAMSRPDNDLIAEVILYSEGFKDAKELGRKLVAIFNLSRELLTPQQHYDWGLRALKTVLRGSGNLLRQLKKNSTKQDVNENHIVVQALRLNTMSKFTFADCTRFDALIKDVFPGIDFKEVEYDELSSALKQVFEEANYEVIPNQMKKALELYEQLRQRTGVVIVGPSGAGKSTLWRMLRAALCKIGKVVKQYTMNPKAMPRHQLLGHIDMDTREWSDGVLTNSARQVVREPQDVSSWIICDGDIDPEWIESLNSVLDDNRLLTMPSGERIQFGPNVNFVFETHDLSCASPATISRMGMIFLSDEETDLNSLIKSWLRNQPLEYRSNLENWIGDYFSKALQWVLKQNDYVVETSLVGTVMNGLSHLHGCKYHDQFIINLIRGLGGNLNMKSRLEFTKEVFNWARETPPDSHRPMDTYYDCDRGQLASYMLKKPESLTADDFSNGHILPVIQTPDMQRGLDYFKPWLSSDTKQPFILVGPEGCGKGMLLRYAFSQLRSTEIATIHCSAQTTSRHLLQKLSQTCMVISTNTGRVYRPKDCERLVLYLKDINLPKLDKWGTSTLVAFLQQVLTYQGFYDENLEWVGLENIQIVASMSAGGRLGRHKLTTRFTSIVRLCAIDYPEREQLQTIYGAYLEAVLHKNLKNHSIWGSSSKIYLLAGSMVQVYEQVRAKFTVDEYSHYFFTPCILTQWVLGLFRYDLEGGSSNHPLDYVLEIVAYEARRLFRDKIVGVKELHLFDNILTSVLQGDWGSDILDNMADSFYVTWGAHHVSGGKTAPGQPLPPHGKPLGKLTSADLKDVIKKGLIHYGRDNQNLDILLFQEVLEYMSRIDRVLSFPGGSLLLAGRSGVGRRTVTSLVSHMHGAVLFSPKISRGYEPKQFRNDLKHVLQLAGIEAQQVVLLLEDYQFVHPTFLEMINSLLASGEVPGLYTLEELEPLLLPLKDQASQDGFFGPVFNYFTYRIQQNLHIVLIMDSANLNFIVNCESNPALHKKCQVLWMEGWSDSSMKKIPEMLFSETDGEEKYEKKRKDEKKRNSVDPDFIKSFLLIHESCKAYGATPSRYMTFLHVYSAISSSKKKELLKRQSHLQAGVSKLNEAKALVDELNRKAGEQSILLRIKQDEADSALQEITVSMQDASEQKTELERLKQRIAEEVVKIEERKSKIDDELKEVQPLVNEAKLAVGNIRPESLSEIRSLRMPPDVIRDILEGVLRLMGIFDTSWVSMKSFLAKRGVREDIATFDARNIPKEIRESVEELLFKNKASFDPKNAKRASTAAAPLAAWVKANVQYSHVLERIQPLETEQSGLELNLKKTEDRKRKLEDLLNSVGQKVSELKEKFQSRTSEAAKLEAEVSKAQETIKAAEVLISQLDREHRRWNAQVAEIAEELATLPKRAQLAAAFITYLSAAPEGLRKNCLEEWTKAAGLEKFDLRRFLCTESEQLIWKSEGLPSDDLSIENALVILQSRVCPFLIDPSSQATEWLKTHLKDSHLEVINQQDSNFITALELAVRFGKTLIIQEMDGVEPVLYPLLRRDLVAQGPRYVVQIGDKIIDYNEDFRLFLSTRNPNPFIPPDAASIVTEVNFTTTRSGLRGQLLALTIQHEKPDLEEQKTKLLQQEEDKKIQLARLEESLLETLATSQGNILENKDLIESLNQTKASSALIQDSLKESYKLQISLDQERDAYLPLAESASKMYFIISDLSKINNMYRFSLASFLRLFQRALQNKQDSENTEERIQCLVNSLKHMVYEYICRCLFKADQLMFALHFVRGMHPELFQENEWDTFTGVVVGDMLRKADSQQRIRDQLPSWIDQERSWAVATLKISLPSLYQTLCLEDGAFWRTYYHHSMCEQEFPSILAKKVSLFQQVLVVQALRPDRLQSAMALFACKALGLKELSPLPLNLKRLYKETLEIEPILIIISPGADPSQELQELASAERSSECYHQVAMGQGQADLAIQMLKECARNGDWLCLKNLHLVVSWLPVLEKELNTLQPKDSFRLWLTAEVHPNFTPILLQSSLKITYESPPGLKKNLMRTYESWTPEQISKRDNIHRAHALFSLAWFHAACQERRNYIPQGWTKFYEFSLSDLRAGYHVIDRLFDGTKDVQWEFVHGLLENSIYGGRVDNYFDLRVLQSYLKQFFNSSIIDVLNQRNKKSIFPYSISLPNSCSILDYRAVIEKLPEDDKPSFFGLPANIARSSQRMISSQVISQLRILGRSVTAGCKFDREIWSNELSPVLNLWKKLNQNSNLIHQKVSPPNDRQGSPILSFIILEQFNAIRLVQSVHQSLAALSKVIRGTTLLSSEVQKLASALLNQKCPLTWQSRWEGPEDPLQYLRGLVARTLAIQNWVEKAEKQVLLADTLDLSELFHPDTFLNALRQETARATGCSVDSLKFVASWKGRLQEAKLQIKISGLLLEGCSFDGNRLSENQHDSPSVSSVLPCYMGWTPQGSYGPYSPDECISLPVYTSAERERVVTNIDVPCGGNQDQWIQCGAALFLKNQ.

The segment at 1 to 1650 is stem; the sequence is MAGSLGDVRK…YVQMVDSELQ (1650 aa). 145–152 contributes to the ATP binding site; the sequence is LGIVLRKS. A coiled-coil region spans residues 669-696; the sequence is KELEGYIQKLQNAAERLATENRRLRKWH. 4 AAA regions span residues 1651–1875, 1941–2161, 2249–2505, and 2617–2862; these read YTYE…VLRG, SALK…KQND, LTAD…WVLG, and HYGR…ESCK. ATP-binding positions include 1689 to 1696, 1979 to 1986, 2291 to 2298, and 2655 to 2662; these read GPAGTGKT, GPSGAGKS, GPEGCGKG, and GRSGVGRR. The interval 2880–3168 is stalk; the sequence is AISSSKKKEL…AEVSKAQETI (289 aa). Coiled coils occupy residues 2896–2981, 3108–3199, and 3407–3441; these read LQAG…KEVQ, LETE…LATL, and IQHEKPDLEEQKTKLLQQEEDKKIQLARLEESLLE. AAA stretches follow at residues 3243 to 3472 and 3689 to 3904; these read LCTE…LIQD and MALF…VIDR.

The protein belongs to the dynein heavy chain family. In terms of assembly, the cytoplasmic dynein complex 2 is probably composed by a heavy chain DYNC2H1 homodimer and a number of DYNC2LI1 light intermediate chains. As to expression, detected in brain, lung, spleen and kidney (at protein level). Enriched in the ependymal layer lining the lateral ventricles (at protein level).

It is found in the cytoplasm. The protein resides in the cytoskeleton. It localises to the cilium axoneme. Its subcellular location is the cell membrane. Its function is as follows. May function as a motor for intraflagellar retrograde transport. Functions in cilia biogenesis. According to PubMed:8666668, it may play a role in transport between endoplasmic reticulum and Golgi or organization of the Golgi in cells. This chain is Cytoplasmic dynein 2 heavy chain 1 (Dync2h1), found in Mus musculus (Mouse).